The following is a 119-amino-acid chain: UPF0102 protein MS1289 (119 aa).

It belongs to the UPF0102 family.

In Mannheimia succiniciproducens (strain KCTC 0769BP / MBEL55E), this protein is UPF0102 protein MS1289.